We begin with the raw amino-acid sequence, 444 residues long: Ribosomal protein uS12 methylthiotransferase RimO (444 aa).

The region spanning 2 to 118 (PSIGLLSLGC…IVEVVNHALE (117 aa)) is the MTTase N-terminal domain. C11, C47, C81, C156, C160, and C163 together coordinate [4Fe-4S] cluster. The Radical SAM core domain maps to 142 to 372 (STPSYTAYVK…MKLQREISLS (231 aa)). In terms of domain architecture, TRAM spans 375–444 (QKRIGQEIEV…EYDLMGELAQ (70 aa)).

Belongs to the methylthiotransferase family. RimO subfamily. [4Fe-4S] cluster serves as cofactor.

Its subcellular location is the cytoplasm. The catalysed reaction is L-aspartate(89)-[ribosomal protein uS12]-hydrogen + (sulfur carrier)-SH + AH2 + 2 S-adenosyl-L-methionine = 3-methylsulfanyl-L-aspartate(89)-[ribosomal protein uS12]-hydrogen + (sulfur carrier)-H + 5'-deoxyadenosine + L-methionine + A + S-adenosyl-L-homocysteine + 2 H(+). Catalyzes the methylthiolation of an aspartic acid residue of ribosomal protein uS12. This is Ribosomal protein uS12 methylthiotransferase RimO from Desulforamulus reducens (strain ATCC BAA-1160 / DSM 100696 / MI-1) (Desulfotomaculum reducens).